A 141-amino-acid chain; its full sequence is MKGAKSKAETRSTKLSVTKKPAKGAKGAAKDPNKPKRPSSAFFVFMEDFRVTYKEEHPKNKSVAAVGKAGGEKWKSLSDSEKAPYVAKADKRKVEYEKNMKAYNKKLEEGPKEDEESDKSVSEVNDEDDAEDGSEEEEDDD.

Basic and acidic residues-rich tracts occupy residues Met-1–Ser-12 and Gly-70–Gly-110. 2 disordered regions span residues Met-1–Ser-40 and Lys-54–Asp-141. The segment at residues Pro-35–Asn-104 is a DNA-binding region (HMG box). Ser-122 is modified (phosphoserine). Acidic residues predominate over residues Val-124–Asp-141.

This sequence belongs to the HMGB family. Expressed in lateral roots, root tips, stems, cotyledons, leaves and flowers (excluding ovary and pedicels).

It is found in the nucleus. The protein localises to the cytoplasm. It localises to the cytosol. Its function is as follows. Binds preferentially double-stranded DNA. The chain is High mobility group B protein 3 (HMGB3) from Arabidopsis thaliana (Mouse-ear cress).